A 171-amino-acid polypeptide reads, in one-letter code: Secreted protein CSS3 (171 aa).

The signal sequence occupies residues 1-20; sequence MVPLFGLFCIFSQLYSLCSA. Asn-37, Asn-139, and Asn-159 each carry an N-linked (GlcNAc...) asparagine glycan.

It is found in the cytoplasm. The protein localises to the secreted. The sequence is that of Secreted protein CSS3 from Saccharomyces cerevisiae (strain ATCC 204508 / S288c) (Baker's yeast).